Reading from the N-terminus, the 208-residue chain is MVFDELISEFDRGLRSLTGISRMSRPVPAPAEAPAAELTPAERTHAAGLMRVNHVGEVCAQALYQAQKLTARTASAKAMFEEAAREEEDHLAWTAHRLKELDSRPSLLNPLWYAGSLAIGVAAGALGDKVSLGFMAETERQVESHLEGHMSELPAADTASRAIVDQMRIDEVKHGKAAADAGGIELPLPARMLMRAASKVMTSTAYYL.

Fe cation is bound by residues Glu57, Glu87, His90, Glu139, Glu171, and His174.

Belongs to the COQ7 family. It depends on Fe cation as a cofactor.

Its subcellular location is the cell membrane. The enzyme catalyses a 5-methoxy-2-methyl-3-(all-trans-polyprenyl)benzene-1,4-diol + AH2 + O2 = a 3-demethylubiquinol + A + H2O. It functions in the pathway cofactor biosynthesis; ubiquinone biosynthesis. Functionally, catalyzes the hydroxylation of 2-nonaprenyl-3-methyl-6-methoxy-1,4-benzoquinol during ubiquinone biosynthesis. The sequence is that of 3-demethoxyubiquinol 3-hydroxylase from Burkholderia lata (strain ATCC 17760 / DSM 23089 / LMG 22485 / NCIMB 9086 / R18194 / 383).